The chain runs to 104 residues: Small ribosomal subunit protein uS10 (104 aa).

Belongs to the universal ribosomal protein uS10 family. As to quaternary structure, part of the 30S ribosomal subunit.

Functionally, involved in the binding of tRNA to the ribosomes. This chain is Small ribosomal subunit protein uS10, found in Hydrogenobaculum sp. (strain Y04AAS1).